The chain runs to 611 residues: Putative type II restriction enzyme HgiDII (611 aa).

A compositionally biased stretch (basic and acidic residues) spans Tyr-355–Val-364. The segment at Tyr-355 to Glu-434 is disordered. The segment covering Thr-381–Thr-409 has biased composition (low complexity). A run of 2 repeats spans residues Asn-382–Glu-392 and Asn-393–Glu-403. Residues Asn-382–Glu-403 form a 2.5 X 11 AA tandem repeats region. Residues Asn-404–Thr-409 form a 3; truncated repeat. A compositionally biased stretch (acidic residues) spans Asn-410 to Pro-425.

It catalyses the reaction Endonucleolytic cleavage of DNA to give specific double-stranded fragments with terminal 5'-phosphates.. In terms of biological role, according to REBASE this is a P subtype restriction enzyme that recognizes the double-stranded sequence 5'-GTCGAC-3' and cleaves after G-1. No restriction activity was detected upon overexpressing this protein in E.coli. In Herpetosiphon aurantiacus (Herpetosiphon giganteus), this protein is Putative type II restriction enzyme HgiDII.